Consider the following 229-residue polypeptide: Secreted RxLR effector protein PITG_22926 (229 aa).

Residues 1 to 23 form the signal peptide; sequence MRCNHTLCVVAITFLVSWSQTLS. Residues 34-45 carry the RxLR-dEER motif; it reads PLVRSVSATEER.

This sequence belongs to the RxLR effector family.

Its subcellular location is the secreted. The protein localises to the host nucleus. In terms of biological role, secreted effector that acts as a RNA silencing suppressor, probably by inhibiting the biogenesis of small RNAs in the host plant, to manipulate host immune responses and promote Phytophthora infection. This chain is Secreted RxLR effector protein PITG_22926, found in Phytophthora infestans (strain T30-4) (Potato late blight agent).